Consider the following 618-residue polypeptide: 1-deoxy-D-xylulose-5-phosphate synthase (618 aa).

Residues His-72 and 113–115 (GHA) each bind thiamine diphosphate. Residue Asp-144 participates in Mg(2+) binding. Thiamine diphosphate is bound by residues 145 to 146 (GA), Asn-173, His-284, and Glu-359. Asn-173 lines the Mg(2+) pocket.

Belongs to the transketolase family. DXPS subfamily. As to quaternary structure, homodimer. Requires Mg(2+) as cofactor. Thiamine diphosphate serves as cofactor.

It catalyses the reaction D-glyceraldehyde 3-phosphate + pyruvate + H(+) = 1-deoxy-D-xylulose 5-phosphate + CO2. It participates in metabolic intermediate biosynthesis; 1-deoxy-D-xylulose 5-phosphate biosynthesis; 1-deoxy-D-xylulose 5-phosphate from D-glyceraldehyde 3-phosphate and pyruvate: step 1/1. In terms of biological role, catalyzes the acyloin condensation reaction between C atoms 2 and 3 of pyruvate and glyceraldehyde 3-phosphate to yield 1-deoxy-D-xylulose-5-phosphate (DXP). The protein is 1-deoxy-D-xylulose-5-phosphate synthase of Dictyoglomus thermophilum (strain ATCC 35947 / DSM 3960 / H-6-12).